The primary structure comprises 78 residues: Small ribosomal subunit protein bS18 (78 aa).

Belongs to the bacterial ribosomal protein bS18 family. Part of the 30S ribosomal subunit. Forms a tight heterodimer with protein bS6.

In terms of biological role, binds as a heterodimer with protein bS6 to the central domain of the 16S rRNA, where it helps stabilize the platform of the 30S subunit. The sequence is that of Small ribosomal subunit protein bS18 from Lactobacillus acidophilus (strain ATCC 700396 / NCK56 / N2 / NCFM).